The chain runs to 496 residues: Genome polyprotein (496 aa).

Residues 1–447 (SRCTHLENRD…HTVLGGAFNS (447 aa)) are Extracellular-facing. Cystine bridges form between Cys-3–Cys-30, Cys-60–Cys-116, Cys-60–Cys-121, Cys-74–Cys-105, Cys-92–Cys-116, and Cys-92–Cys-121. The fusion peptide stretch occupies residues 98–111 (DRGWGNHCGLFGKG). N-linked (GlcNAc...) asparagine; by host glycosylation occurs at Asn-154. Disulfide bonds link Cys-186-Cys-290 and Cys-307-Cys-338. A helical transmembrane segment spans residues 448–468 (IFGGVGFLPKLLMGVALAWLG). Over 469 to 479 (LNTRNPTMSMS) the chain is Cytoplasmic. Residues 480-496 (FLLTGGLVLAMTLGVGA) form a helical membrane-spanning segment.

As to quaternary structure, homodimer; in the endoplasmic reticulum and Golgi. Post-translationally, N-glycosylated.

It is found in the virion membrane. It localises to the host endoplasmic reticulum membrane. Binds to host cell surface receptor and mediates fusion between viral and cellular membranes. Envelope protein is synthesized in the endoplasmic reticulum in the form of heterodimer with protein prM. They play a role in virion budding in the ER, and the newly formed immature particle is covered with 60 spikes composed of heterodimer between precursor prM and envelope protein E. The virion is transported to the Golgi apparatus where the low pH causes dissociation of PrM-E heterodimers and formation of E homodimers. prM-E cleavage is ineficient, and many virions are only partially matured. These uncleaved prM would play a role in immune evasion. This chain is Genome polyprotein, found in Bos taurus (Bovine).